Consider the following 353-residue polypeptide: D-alanine--D-alanine ligase (353 aa).

Positions 141–349 (KAAFAAAGLP…LEELVSQLVI (209 aa)) constitute an ATP-grasp domain. 176 to 231 (EAKLKYPCFVKPANLGSSVGISKAQNRNELLIGLDKAASLDRRIVVEQGVSARELE) contacts ATP. Residues D302, E316, and N318 each coordinate Mg(2+).

Belongs to the D-alanine--D-alanine ligase family. Requires Mg(2+) as cofactor. Mn(2+) is required as a cofactor.

The protein resides in the cytoplasm. The enzyme catalyses 2 D-alanine + ATP = D-alanyl-D-alanine + ADP + phosphate + H(+). The protein operates within cell wall biogenesis; peptidoglycan biosynthesis. Cell wall formation. The sequence is that of D-alanine--D-alanine ligase from Prochlorococcus marinus (strain MIT 9313).